The chain runs to 327 residues: Probable cell division protein WhiA (327 aa).

The segment at residues 275–308 (SLEELGRLADPQMTKDAVAGRIRRLLTTADKRAR) is a DNA-binding region (H-T-H motif).

It belongs to the WhiA family.

In terms of biological role, involved in cell division and chromosome segregation. This is Probable cell division protein WhiA from Corynebacterium efficiens (strain DSM 44549 / YS-314 / AJ 12310 / JCM 11189 / NBRC 100395).